The following is a 209-amino-acid chain: V-type ATP synthase subunit D (209 aa).

This sequence belongs to the V-ATPase D subunit family.

In terms of biological role, produces ATP from ADP in the presence of a proton gradient across the membrane. In Anaeromyxobacter sp. (strain K), this protein is V-type ATP synthase subunit D.